The following is a 148-amino-acid chain: Large ribosomal subunit protein bL9 (148 aa).

This sequence belongs to the bacterial ribosomal protein bL9 family.

In terms of biological role, binds to the 23S rRNA. The chain is Large ribosomal subunit protein bL9 from Syntrophotalea carbinolica (strain DSM 2380 / NBRC 103641 / GraBd1) (Pelobacter carbinolicus).